Here is a 315-residue protein sequence, read N- to C-terminus: Zinc finger transcription factor ref-2 (315 aa).

The C2H2-type 1; atypical zinc finger occupies 83 to 112; sequence VQCLWETNGQVCMHVCQNSGELSTHISSNH. The C2H2-type 2; degenerate zinc-finger motif lies at 124–146; that stretch reads KGCDREFKMFKAKYKLVNHMRVH. 3 C2H2-type zinc fingers span residues 152 to 174, 180 to 204, and 210 to 234; these read FLCD…KRIH, FQCT…MHVH, and YSCM…TKVH. Positions 225-270 are disordered; the sequence is SSLRKHTKVHENEKKSQLSPEHDESSDSGNASIGTPTTDESLTFSP. Positions 233 to 249 are enriched in basic and acidic residues; the sequence is VHENEKKSQLSPEHDES. Polar residues predominate over residues 251-270; it reads DSGNASIGTPTTDESLTFSP.

In terms of assembly, interacts with TCF transcription factor pop-1; the interaction is direct and facilitates transcriptional activation; transcription may be repressed by beta-catenin/sys-1.

The protein resides in the nucleus. It is found in the cytoplasm. Its function is as follows. Transcription factor. Modulates expression of target genes by binding to regulatory elements. Required for normal cell division timing and cell positioning in anterior lineages, acting in a cell-autonomous manner. Required for development, fusion and fate of cells of the ventral epidermis, the Pn.p cells, during larval development; acts in concert with homeobox genes lin-39 and mab-5. Required for the specification of the AIY interneuron. In complex with TCF transcription factor pop-1, positively modulates expression of LIM/homeobox protein ttx-3 in anterior daughter cells of the SMDD/AIY neuron lineage. This chain is Zinc finger transcription factor ref-2, found in Caenorhabditis elegans.